Consider the following 261-residue polypeptide: 4-hydroxy-tetrahydrodipicolinate reductase (261 aa).

9–14 serves as a coordination point for NAD(+); that stretch reads GCLGRM. R36 is a binding site for NADP(+). Residues 97-99 and 118-121 each bind NAD(+); these read GTT and SANM. Catalysis depends on H151, which acts as the Proton donor/acceptor. Residue H152 participates in (S)-2,3,4,5-tetrahydrodipicolinate binding. The Proton donor role is filled by K155. (S)-2,3,4,5-tetrahydrodipicolinate is bound at residue 161–162; sequence GT.

Belongs to the DapB family.

The protein localises to the cytoplasm. It catalyses the reaction (S)-2,3,4,5-tetrahydrodipicolinate + NAD(+) + H2O = (2S,4S)-4-hydroxy-2,3,4,5-tetrahydrodipicolinate + NADH + H(+). The enzyme catalyses (S)-2,3,4,5-tetrahydrodipicolinate + NADP(+) + H2O = (2S,4S)-4-hydroxy-2,3,4,5-tetrahydrodipicolinate + NADPH + H(+). It functions in the pathway amino-acid biosynthesis; L-lysine biosynthesis via DAP pathway; (S)-tetrahydrodipicolinate from L-aspartate: step 4/4. In terms of biological role, catalyzes the conversion of 4-hydroxy-tetrahydrodipicolinate (HTPA) to tetrahydrodipicolinate. The sequence is that of 4-hydroxy-tetrahydrodipicolinate reductase from Wolbachia sp. subsp. Drosophila simulans (strain wRi).